We begin with the raw amino-acid sequence, 268 residues long: Ribosomal RNA small subunit methyltransferase A (268 aa).

S-adenosyl-L-methionine contacts are provided by Asn-18, Leu-20, Gly-45, Glu-66, Asp-91, and Asn-112.

This sequence belongs to the class I-like SAM-binding methyltransferase superfamily. rRNA adenine N(6)-methyltransferase family. RsmA subfamily.

The protein localises to the cytoplasm. The catalysed reaction is adenosine(1518)/adenosine(1519) in 16S rRNA + 4 S-adenosyl-L-methionine = N(6)-dimethyladenosine(1518)/N(6)-dimethyladenosine(1519) in 16S rRNA + 4 S-adenosyl-L-homocysteine + 4 H(+). Its function is as follows. Specifically dimethylates two adjacent adenosines (A1518 and A1519) in the loop of a conserved hairpin near the 3'-end of 16S rRNA in the 30S particle. May play a critical role in biogenesis of 30S subunits. This Vibrio vulnificus (strain CMCP6) protein is Ribosomal RNA small subunit methyltransferase A.